We begin with the raw amino-acid sequence, 370 residues long: Divinyl chlorophyll a/b light-harvesting protein PcbD (370 aa).

6 helical membrane-spanning segments follow: residues 27-47, 88-108, 140-160, 201-221, 248-268, and 315-335; these read FIASHIGHTGLIAFAAGGSTL, VAAVAIVHLVLSMVYGGGALL, FILGHHLFFFGMACIAFVEWA, VMGGHAFLAFAELTGATIHMV, AVLSWSLAGIGWMAIVAAFWA, and LVNVHYYFGFFFLQGHFWHAL.

It belongs to the PsbB/PsbC family. IsiA/Pcb subfamily. In terms of assembly, the antenna complex consists of divinyl chlorophylls (a and b) and divinyl chlorophyll a/b binding proteins and binds more divinyl chlorophyll b than does the antenna complex from high-light-adapted Prochlorococcus. Requires divinyl chlorophyll a as cofactor. It depends on divinyl chlorophyll b as a cofactor.

The protein resides in the cellular thylakoid membrane. Its function is as follows. The antenna complex functions as a light receptor, it captures and delivers excitation energy to photosystems II and I. The Prochlorales pcb genes are not related to higher plant LHCs. In Prochlorococcus marinus (strain NATL2A), this protein is Divinyl chlorophyll a/b light-harvesting protein PcbD (pcbD).